The following is a 148-amino-acid chain: Putative nickel-responsive regulator (148 aa).

Ni(2+)-binding residues include His88, His99, His101, and Cys107.

It belongs to the transcriptional regulatory CopG/NikR family. Ni(2+) serves as cofactor.

In terms of biological role, transcriptional regulator. The sequence is that of Putative nickel-responsive regulator from Helicobacter pylori (strain P12).